The primary structure comprises 491 residues: Katanin p60 ATPase-containing subunit A1 (491 aa).

An interaction with KATNB1 region spans residues 1 to 29 (MSLLMISENVKLAREYALLGNYDSAMVYY). The interaction with dynein and NDEL1 stretch occupies residues 1–75 (MSLLMISENV…VKDIMKTLES (75 aa)). The interval 1-185 (MSLLMISENV…EPETNKFDST (185 aa)) is interaction with microtubules. Phosphoserine; by DYRK2 occurs at positions 42 and 109. Residues 87-185 (QHDLPASEGE…EPETNKFDST (99 aa)) are disordered. A compositionally biased stretch (polar residues) spans 117 to 144 (SSQYSDPKSHGNRPSTTVRVHRSSAQNV). Phosphothreonine; by DYRK2 is present on T133. Basic and acidic residues predominate over residues 145–169 (HNDRGKAVRCREKKEQNKGREEKNK). Position 170 is a phosphoserine (S170). 249-256 (GPPGTGKT) lines the ATP pocket.

This sequence belongs to the AAA ATPase family. Katanin p60 subunit A1 subfamily. Can homooligomerize into hexameric rings, which may be promoted by interaction with microtubules. Interacts with KATNB1, which may serve as a targeting subunit. Interacts with ASPM; the katanin complex formation KATNA1:KATNB1 is required for the association of ASPM. Interacts with dynein and NDEL1. Associates with the E3 ligase complex containing DYRK2, EDD/UBR5, DDB1 and DCAF1 proteins (EDVP complex). Interacts with KLHL42 (via the kelch domains). Interacts with CUL3; the interaction is enhanced by KLHL42. Interacts with KATNB1 and KATNBL1. Interacts with CAMSAP2 and CAMSAP3; leading to regulate the length of CAMSAP-decorated microtubule stretches. Phosphorylation by DYRK2 triggers ubiquitination and subsequent degradation. In terms of processing, ubiquitinated by the BCR(KLHL42) E3 ubiquitin ligase complex, leading to its proteasomal degradation. Ubiquitinated by the EDVP E3 ligase complex and subsequently targeted for proteasomal degradation.

It localises to the cytoplasm. It is found in the midbody. The protein localises to the cytoskeleton. The protein resides in the microtubule organizing center. Its subcellular location is the centrosome. It localises to the spindle pole. It is found in the spindle. It catalyses the reaction n ATP + n H2O + a microtubule = n ADP + n phosphate + (n+1) alpha/beta tubulin heterodimers.. Its activity is regulated as follows. ATPase activity is stimulated by microtubules, which promote homooligomerization. ATP-dependent microtubule severing is stimulated by interaction with KATNB1. Its function is as follows. Catalytic subunit of a complex which severs microtubules in an ATP-dependent manner. Microtubule severing may promote rapid reorganization of cellular microtubule arrays and the release of microtubules from the centrosome following nucleation. Microtubule release from the mitotic spindle poles may allow depolymerization of the microtubule end proximal to the spindle pole, leading to poleward microtubule flux and poleward motion of chromosome. Microtubule release within the cell body of neurons may be required for their transport into neuronal processes by microtubule-dependent motor proteins. This transport is required for axonal growth. This is Katanin p60 ATPase-containing subunit A1 from Homo sapiens (Human).